The following is a 203-amino-acid chain: MAKGRKPTTMNRSDRYLGSYTYGDSHGNSVTDELELGEEDIWSPAVIHDDTTENEESYGTWNLRATLGKNGRVGGLSLAFEGSLVAPPSSSPMIVQKIHGGGGEGEEDRRKLASSAPVNVPDWSKIYRVDSVESIHELDDEDDEDEESGMMPPHEYLAKSQARRSRKIGGGGASVFDGVGRTLKGRELRRVRDAIWSQTGFYG.

The tract at residues 1 to 33 (MAKGRKPTTMNRSDRYLGSYTYGDSHGNSVTDE) is disordered.

This sequence belongs to the senescence regulator S40 family.

The protein resides in the cytoplasm. In Arabidopsis thaliana (Mouse-ear cress), this protein is Protein S40-6.